The following is a 437-amino-acid chain: Adenylosuccinate synthetase (437 aa).

Residues 25–31 (GDEGKGK), 53–55 (GHT), and K62 contribute to the GTP site. Catalysis depends on D26, which acts as the Proton acceptor. D26 and G53 together coordinate Mg(2+). IMP-binding positions include 26 to 29 (DEGK) and 51 to 54 (NAGH). The active-site Proton donor is H54. T141, R155, N232, and T247 together coordinate IMP. T307 is a GTP binding site. 307-313 (TTTKRPR) lines the substrate pocket. Residue R311 participates in IMP binding. Residues R313, 339 to 341 (KLD), and 425 to 427 (GVG) each bind GTP.

Belongs to the adenylosuccinate synthetase family. In terms of assembly, homodimer. Mg(2+) is required as a cofactor.

The protein resides in the cytoplasm. It catalyses the reaction IMP + L-aspartate + GTP = N(6)-(1,2-dicarboxyethyl)-AMP + GDP + phosphate + 2 H(+). Its pathway is purine metabolism; AMP biosynthesis via de novo pathway; AMP from IMP: step 1/2. Functionally, plays an important role in the salvage pathway for purine nucleotide biosynthesis. Catalyzes the first committed step in the biosynthesis of AMP from IMP. The chain is Adenylosuccinate synthetase from Plasmodium knowlesi (strain H).